Reading from the N-terminus, the 137-residue chain is Basic phospholipase A2 homolog bothropstoxin-I (137 aa).

The N-terminal stretch at 1-16 (MRTLWIMAVLLVGVEG) is a signal peptide. Disulfide bonds link C42/C131, C44/C60, C59/C111, C65/C137, C66/C104, C73/C97, and C91/C102. The tract at residues 121-133 (KKYRYHLKPFCKK) is important for membrane-damaging activities in eukaryotes and bacteria; heparin-binding.

This sequence belongs to the phospholipase A2 family. Group II subfamily. K49 sub-subfamily. As to quaternary structure, homodimer; non-covalently linked (probable alternative/compact dimer conformation in solution). Binds to heparin. As to expression, expressed by the venom gland.

It is found in the secreted. With respect to regulation, suramin inhibits both myotoxic and muscle-paralyzing activities. Chicoric acid inhibits myotoxic activity. Zinc ions inhibits the myotoxic activity and the neuromuscular blockade. Heparin inhibits myotoxic activity. Functionally, snake venom phospholipase A2 homolog that lacks enzymatic activity. Shows local myotoxic activity. Induces inflammation, since it induces edema and leukocytes infiltration. In addition, it induces NLRP3 NLRP3, ASC (PYCARD), caspase-1 (CASP1), and IL-1beta (IL1B) gene expression in the gastrocnemius muscle, showing that it is able to activate NLRP3 inflammasome. It also damages artificial and myoblast membranes by a calcium-independent mechanism, has bactericidal activity, and induces neuromuscular blockade. A model of myotoxic mechanism has been proposed: an apo Lys49-PLA2 is activated by the entrance of a hydrophobic molecule (e.g. fatty acid) at the hydrophobic channel of the protein leading to a reorientation of a monomer. This reorientation causes a transition between 'inactive' to 'active' states, causing alignment of C-terminal and membrane-docking sites (MDoS) side-by-side and putting the membrane-disruption sites (MDiS) in the same plane, exposed to solvent and in a symmetric position for both monomers. The MDoS region stabilizes the toxin on membrane by the interaction of charged residues with phospholipid head groups. Subsequently, the MDiS region destabilizes the membrane with penetration of hydrophobic residues. This insertion causes a disorganization of the membrane, allowing an uncontrolled influx of ions (i.e. calcium and sodium), and eventually triggering irreversible intracellular alterations and cell death. The polypeptide is Basic phospholipase A2 homolog bothropstoxin-I (Bothrops jararacussu (Jararacussu)).